A 316-amino-acid chain; its full sequence is 1-aminocyclopropane-1-carboxylate oxidase 4 (316 aa).

Residues 153–253 (PNFGTKVSNY…RMSLASFYNP (101 aa)) form the Fe2OG dioxygenase domain. Fe cation contacts are provided by His177, Asp179, and His234.

It belongs to the iron/ascorbate-dependent oxidoreductase family. Fe cation is required as a cofactor. As to expression, expressed in all of the floral organs examined apart from the sepals.

It carries out the reaction 1-aminocyclopropane-1-carboxylate + L-ascorbate + O2 = ethene + L-dehydroascorbate + hydrogen cyanide + CO2 + 2 H2O. Its pathway is alkene biosynthesis; ethylene biosynthesis via S-adenosyl-L-methionine; ethylene from S-adenosyl-L-methionine: step 2/2. The protein is 1-aminocyclopropane-1-carboxylate oxidase 4 (ACO4) of Solanum lycopersicum (Tomato).